A 155-amino-acid chain; its full sequence is Interleukin-2 (155 aa).

Positions 1-20 (MYKMQLLSCIALTLVLVANS) are cleaved as a signal peptide. O-linked (GalNAc...) threonine glycosylation is present at threonine 24. Cysteines 79 and 127 form a disulfide. Asparagine 112 carries an N-linked (GlcNAc...) asparagine glycan.

This sequence belongs to the IL-2 family.

The protein resides in the secreted. Functionally, cytokine produced by activated CD4-positive helper T-cells and to a lesser extend activated CD8-positive T-cells and natural killer (NK) cells that plays pivotal roles in the immune response and tolerance. Binds to a receptor complex composed of either the high-affinity trimeric IL-2R (IL2RA/CD25, IL2RB/CD122 and IL2RG/CD132) or the low-affinity dimeric IL-2R (IL2RB and IL2RG). Interaction with the receptor leads to oligomerization and conformation changes in the IL-2R subunits resulting in downstream signaling starting with phosphorylation of JAK1 and JAK3. In turn, JAK1 and JAK3 phosphorylate the receptor to form a docking site leading to the phosphorylation of several substrates including STAT5. This process leads to activation of several pathways including STAT, phosphoinositide-3-kinase/PI3K and mitogen-activated protein kinase/MAPK pathways. Functions as a T-cell growth factor and can increase NK-cell cytolytic activity as well. Promotes strong proliferation of activated B-cells and subsequently immunoglobulin production. Plays a pivotal role in regulating the adaptive immune system by controlling the survival and proliferation of regulatory T-cells, which are required for the maintenance of immune tolerance. Moreover, participates in the differentiation and homeostasis of effector T-cell subsets, including Th1, Th2, Th17 as well as memory CD8-positive T-cells. This chain is Interleukin-2 (IL2), found in Canis lupus familiaris (Dog).